We begin with the raw amino-acid sequence, 270 residues long: Ribonuclease HII (270 aa).

Residues 84-270 (RYIAGVDEVG…HRNSFLTKLL (187 aa)) enclose the RNase H type-2 domain. Residues D90, E91, and D186 each contribute to the a divalent metal cation site.

This sequence belongs to the RNase HII family. Mn(2+) serves as cofactor. It depends on Mg(2+) as a cofactor.

It is found in the cytoplasm. It catalyses the reaction Endonucleolytic cleavage to 5'-phosphomonoester.. Endonuclease that specifically degrades the RNA of RNA-DNA hybrids. This Clostridium beijerinckii (strain ATCC 51743 / NCIMB 8052) (Clostridium acetobutylicum) protein is Ribonuclease HII.